A 298-amino-acid polypeptide reads, in one-letter code: Mitochondrial 2-oxodicarboxylate carrier (298 aa).

Solcar repeat units lie at residues 10–99 (HETS…YKKF), 106–195 (SPGL…VKNI), and 204–293 (LEFL…TYAW). 6 helical membrane passes run 16 to 36 (VAAGGSAGLVEICLMHPLDVV), 69 to 88 (FGFYKGIIPPILAETPKRAV), 112 to 132 (LIAGLGSGLTEAVVVNPFEVV), 166 to 186 (GLNKGLTATLGRHGIFNMVYF), 204 to 224 (LEFLRKFGIGFVSGTMGSVFN), and 276 to 296 (LGPGGGVMLLVYEYTYAWLQE).

It belongs to the mitochondrial carrier (TC 2.A.29) family.

The protein resides in the mitochondrion inner membrane. It carries out the reaction 2-oxoadipate(in) + 2-oxoglutarate(out) = 2-oxoadipate(out) + 2-oxoglutarate(in). The catalysed reaction is hexanedioate(in) + 2-oxoglutarate(out) = hexanedioate(out) + 2-oxoglutarate(in). It catalyses the reaction L-2-aminoadipate(in) + 2-oxoglutarate(out) = L-2-aminoadipate(out) + 2-oxoglutarate(in). The enzyme catalyses glutarate(in) + 2-oxoglutarate(out) = glutarate(out) + 2-oxoglutarate(in). It carries out the reaction 2-oxoheptanedioate(in) + 2-oxoglutarate(out) = 2-oxoheptanedioate(out) + 2-oxoglutarate(in). The catalysed reaction is heptanedioate(in) + 2-oxoglutarate(out) = heptanedioate(out) + 2-oxoglutarate(in). It catalyses the reaction citrate(in) + 2-oxoglutarate(out) = citrate(out) + 2-oxoglutarate(in). Transports dicarboxylates across the inner membranes of mitochondria by a counter-exchange mechanism. Can transport 2-oxoadipate (2-oxohexanedioate), 2-oxoglutarate, adipate (hexanedioate), glutarate, and to a lesser extent, pimelate (heptanedioate), 2-oxopimelate (2-oxoheptanedioate), 2-aminoadipate (2-aminohexanedioate), oxaloacetate, and citrate. Plays a central role in catabolism of lysine, hydroxylysine, and tryptophan, by transporting common metabolite intermediates (such as 2-oxoadipate) into the mitochondria, where it is converted into acetyl-CoA and can enter the citric acid (TCA) cycle. This chain is Mitochondrial 2-oxodicarboxylate carrier (Slc25a21), found in Mus musculus (Mouse).